A 470-amino-acid polypeptide reads, in one-letter code: MTPFMTEDFLLDTEFARRLYHDYAKDQPIFDYHCHLPPQQIAEDYRFKNLYDIWLKGDHYKWRAMRTNGVAERLCTGDASDREKFDAWAATVPHTIGNPLYHWTHLELRRPFGITGKLLSPSTADEIWNECNELLAQDNFSARGIMQQMNVKMVGTTDDPIDSLEHHAEIAKDGSFTIKVLPSWRPDKAFNIEQATFNDYMAKLGEVSDTDIRRFADLQTALTKRLDHFAAHGCKVSDHALDVVMFAEANEAELDRILARRLAGETLSEHEVAQFKTAVLVFLGAEYARRGWVQQYHIGALRNNNLRQFKLLGPDVGFDSINDRPMAEELSKLLSKQNEENLLPKTILYCLNPRDNEVLGTMIGNFQGEGMPGKMQFGSGWWFNDQKDGMERQMTQLAQLGLLSRFVGMLTDSRSFLSYTRHEYFRRILCQMIGRWVEAGEAPADINLLGEMVKNICFNNARDYFAIELN.

The protein belongs to the metallo-dependent hydrolases superfamily. Uronate isomerase family.

The catalysed reaction is D-glucuronate = D-fructuronate. The enzyme catalyses aldehydo-D-galacturonate = keto-D-tagaturonate. It functions in the pathway carbohydrate metabolism; pentose and glucuronate interconversion. This Escherichia coli O17:K52:H18 (strain UMN026 / ExPEC) protein is Uronate isomerase.